A 236-amino-acid chain; its full sequence is Purine nucleoside phosphorylase DeoD-type 2 (236 aa).

Residue His-5 coordinates a purine D-ribonucleoside. Phosphate contacts are provided by residues Gly-21, Arg-25, Arg-44, and 88-91; that span reads RVGT. A purine D-ribonucleoside contacts are provided by residues 180–182 and 204–205; these read EME and SD. Asp-205 functions as the Proton donor in the catalytic mechanism.

Belongs to the PNP/UDP phosphorylase family. In terms of assembly, homohexamer; trimer of homodimers.

It carries out the reaction a purine D-ribonucleoside + phosphate = a purine nucleobase + alpha-D-ribose 1-phosphate. The catalysed reaction is a purine 2'-deoxy-D-ribonucleoside + phosphate = a purine nucleobase + 2-deoxy-alpha-D-ribose 1-phosphate. In terms of biological role, catalyzes the reversible phosphorolytic breakdown of the N-glycosidic bond in the beta-(deoxy)ribonucleoside molecules, with the formation of the corresponding free purine bases and pentose-1-phosphate. In Shewanella oneidensis (strain ATCC 700550 / JCM 31522 / CIP 106686 / LMG 19005 / NCIMB 14063 / MR-1), this protein is Purine nucleoside phosphorylase DeoD-type 2.